Reading from the N-terminus, the 232-residue chain is Phosphatidylserine decarboxylase proenzyme (232 aa).

Ser201 functions as the Schiff-base intermediate with substrate; via pyruvic acid in the catalytic mechanism. Ser201 carries the post-translational modification Pyruvic acid (Ser); by autocatalysis.

The protein belongs to the phosphatidylserine decarboxylase family. PSD-A subfamily. In terms of assembly, heterodimer of a large membrane-associated beta subunit and a small pyruvoyl-containing alpha subunit. The cofactor is pyruvate. In terms of processing, is synthesized initially as an inactive proenzyme. Formation of the active enzyme involves a self-maturation process in which the active site pyruvoyl group is generated from an internal serine residue via an autocatalytic post-translational modification. Two non-identical subunits are generated from the proenzyme in this reaction, and the pyruvate is formed at the N-terminus of the alpha chain, which is derived from the carboxyl end of the proenzyme. The post-translation cleavage follows an unusual pathway, termed non-hydrolytic serinolysis, in which the side chain hydroxyl group of the serine supplies its oxygen atom to form the C-terminus of the beta chain, while the remainder of the serine residue undergoes an oxidative deamination to produce ammonia and the pyruvoyl prosthetic group on the alpha chain.

The protein localises to the cell membrane. The enzyme catalyses a 1,2-diacyl-sn-glycero-3-phospho-L-serine + H(+) = a 1,2-diacyl-sn-glycero-3-phosphoethanolamine + CO2. Its pathway is phospholipid metabolism; phosphatidylethanolamine biosynthesis; phosphatidylethanolamine from CDP-diacylglycerol: step 2/2. In terms of biological role, catalyzes the formation of phosphatidylethanolamine (PtdEtn) from phosphatidylserine (PtdSer). This Mycolicibacterium gilvum (strain PYR-GCK) (Mycobacterium gilvum (strain PYR-GCK)) protein is Phosphatidylserine decarboxylase proenzyme.